Reading from the N-terminus, the 481-residue chain is Ribosomal protein uS12 methylthiotransferase RimO (481 aa).

An MTTase N-terminal domain is found at 38 to 148 (NRIGFVSLGC…VLKHVHKYVP (111 aa)). Residues Cys-47, Cys-83, Cys-112, Cys-180, Cys-184, and Cys-187 each contribute to the [4Fe-4S] cluster site. The Radical SAM core domain maps to 166 to 403 (LTPKHYAYLK…MEVQAEISAE (238 aa)). The region spanning 406 to 472 (ARFVGRTMDI…EHDLWAELVD (67 aa)) is the TRAM domain.

It belongs to the methylthiotransferase family. RimO subfamily. Requires [4Fe-4S] cluster as cofactor.

It is found in the cytoplasm. It carries out the reaction L-aspartate(89)-[ribosomal protein uS12]-hydrogen + (sulfur carrier)-SH + AH2 + 2 S-adenosyl-L-methionine = 3-methylsulfanyl-L-aspartate(89)-[ribosomal protein uS12]-hydrogen + (sulfur carrier)-H + 5'-deoxyadenosine + L-methionine + A + S-adenosyl-L-homocysteine + 2 H(+). Catalyzes the methylthiolation of an aspartic acid residue of ribosomal protein uS12. This Shewanella oneidensis (strain ATCC 700550 / JCM 31522 / CIP 106686 / LMG 19005 / NCIMB 14063 / MR-1) protein is Ribosomal protein uS12 methylthiotransferase RimO.